The sequence spans 1181 residues: WD repeat-containing protein 35 (1181 aa).

WD repeat units lie at residues 12–51 (PNNV…DDSK), 69–108 (GHSG…WYEE), 113–152 (RNKS…IWGK), 154–193 (LKGI…IMKM), and 502–539 (GTRD…LIQK).

Component of the IFT complex A (IFT-A) complex. IFT-A complex is divided into a core subcomplex composed of IFT122:IFT140:WDR19 which is associated with TULP3 and a peripheral subcomplex composed of IFT43:WDR35:TTC21B. Interacts directy with IFT122, ITF43 and TTC21B. Interacts with IFT43. Interacts with CFAP61.

The protein resides in the cytoplasm. Its subcellular location is the cytoskeleton. It localises to the microtubule organizing center. The protein localises to the centrosome. It is found in the cilium axoneme. The protein resides in the cilium basal body. As a component of the IFT complex A (IFT-A), a complex required for retrograde ciliary transport and entry into cilia of G protein-coupled receptors (GPCRs), it is involved in ciliogenesis and ciliary protein trafficking. May promote CASP3 activation and TNF-stimulated apoptosis. The chain is WD repeat-containing protein 35 from Mus musculus (Mouse).